Reading from the N-terminus, the 633-residue chain is MTTPKKTAKTSGNEARELADLSEDIGIRFKYPNSERVYLQGSRDDIRVPLREIRQDDTYTAQGAEANPPIPVYDTSGVYGDPAAHIDLKQGLPHIRTAWLNERGDTEILPKLSSEYGIERAHDPKTAHLRFNQITRPRRAKSGGNVTQLHYARRGIITPEMEFVAIRERLKLDELSQKSEYAKLLKQHAGQSFGANIPTHPDQITPEFVRREIAAGRAIIPANINHPELEPMIIGRNFRVKINGNLGNSAVTSSLTEEVEKMVWSLRWGADTIMDLSTGAHIHETREWIIRNAPVPIGTVPIYQALEKTGGIAEDLTWDLFRDTLIEQAEQGVDYFTIHAGVLLRYVPMTADRLTGIVSRGGSIMAKWCLAHHRENFLYTHFDEICEIMKAYDVSFSLGDGLRPGCIADANDESQFAELHTLGELTSKAWKHDVQVMIEGPGHVPLQRVKENMTEELQHCFEAPFYTLGPLVTDIAPGYDHITSGIGAANIGWYGTAMLCYVTPKEHLGLPDKEDVRTGIITYKLAAHAADLAKGWPGAQLRDNALSKARFEFRWRDQFRLSLDPERAESFHDETLPAEGAKIAHFCSMCGPKFCSMKITQEVRDYADKQKAQRQGMEEKAVEFVKKGAKIYS.

Substrate is bound by residues Asn-245, Met-274, Tyr-303, His-339, 359 to 361 (SRG), 400 to 403 (DGLR), and Glu-439. His-443 provides a ligand contact to Zn(2+). Tyr-466 lines the substrate pocket. His-507 lines the Zn(2+) pocket. Residues Cys-587, Cys-590, and Cys-595 each coordinate [4Fe-4S] cluster.

It belongs to the ThiC family. In terms of assembly, homodimer. Requires [4Fe-4S] cluster as cofactor.

It catalyses the reaction 5-amino-1-(5-phospho-beta-D-ribosyl)imidazole + S-adenosyl-L-methionine = 4-amino-2-methyl-5-(phosphooxymethyl)pyrimidine + CO + 5'-deoxyadenosine + formate + L-methionine + 3 H(+). It participates in cofactor biosynthesis; thiamine diphosphate biosynthesis. Functionally, catalyzes the synthesis of the hydroxymethylpyrimidine phosphate (HMP-P) moiety of thiamine from aminoimidazole ribotide (AIR) in a radical S-adenosyl-L-methionine (SAM)-dependent reaction. The chain is Phosphomethylpyrimidine synthase from Neisseria meningitidis serogroup C / serotype 2a (strain ATCC 700532 / DSM 15464 / FAM18).